Consider the following 272-residue polypeptide: ATP phosphoribosyltransferase regulatory subunit (272 aa).

It belongs to the class-II aminoacyl-tRNA synthetase family. HisZ subfamily. As to quaternary structure, heteromultimer composed of HisG and HisZ subunits.

Its subcellular location is the cytoplasm. It participates in amino-acid biosynthesis; L-histidine biosynthesis; L-histidine from 5-phospho-alpha-D-ribose 1-diphosphate: step 1/9. Its function is as follows. Required for the first step of histidine biosynthesis. May allow the feedback regulation of ATP phosphoribosyltransferase activity by histidine. The polypeptide is ATP phosphoribosyltransferase regulatory subunit (Staphylococcus aureus (strain bovine RF122 / ET3-1)).